The sequence spans 602 residues: Aryl hydrocarbon receptor protein 1 (602 aa).

The propeptide occupies 1-2; the sequence is MY. Over residues 1–12 the composition is skewed to basic residues; sequence MYASKRRQRNFK. Residues 1–28 form a disordered region; it reads MYASKRRQRNFKRVRDPPKQLTNTNPSK. 2 short sequence motifs (nuclear localization signal) span residues 5 to 8 and 28 to 33; these read KRRQ and KRHRER. The region spanning 18 to 71 is the bHLH domain; the sequence is PKQLTNTNPSKRHRERLNGELETVAMLLPYDSSTISRLDKLSVLRLAVSFLQCK. Required for maintaining the overall integrity of the AHR:ARNT heterodimer and its transcriptional activity regions lie at residues 41 to 73, 133 to 141, and 266 to 268; these read VAMLLPYDSSTISRLDKLSVLRLAVSFLQCKAH, SLKSLGGFI, and ICV. The short motif at 55–63 is the Nuclear export signal element; the sequence is LDKLSVLRL. One can recognise a PAS domain in the interval 126–196; it reads ESNFEEISLK…QQLDSNFHIP (71 aa). Residues 440–467 form a disordered region; it reads STSNSLFPSVPVPTPTTTKANRRRKENS.

Interacts with daf-21/hsp90. Interacts with aha-1. In terms of tissue distribution, expressed in many distinct neuronal cells including RMED, RMEV, RMEL and RMER. Functions in URX neurons to promote aggregation behavior.

It is found in the nucleus. In terms of biological role, probable ligand-activated transcriptional activator. Acts as a transcriptional regulator in GABAergic motor neuron cell fate specification and development. Promotes cell-type-specific expression of guanylate cyclase genes that have key roles in aggregation behavior and hyperoxia avoidance. Has no role in carbon dioxide avoidance. The chain is Aryl hydrocarbon receptor protein 1 from Caenorhabditis elegans.